The primary structure comprises 407 residues: uncharacterized protein (407 aa).

2 coiled-coil regions span residues 96-130 and 287-345; these read TDSI…FKNE and MKCY…AKTS. Basic and acidic residues predominate over residues 302–317; the sequence is EKRKDNLQKQNEEAAK. Residues 302–394 are disordered; it reads EKRKDNLQKQ…NMDPAINESD (93 aa). Residues 318 to 331 are compositionally biased toward basic residues; the sequence is ITKRKNRQEKRREK. The span at 344–370 shows a compositional bias: low complexity; the sequence is TSVSSIPDTSSTTTSTNSTPTNTKSNS.

This is an uncharacterized protein from Acanthamoeba polyphaga (Amoeba).